The sequence spans 551 residues: Frizzled-2 (551 aa).

Positions 1–26 are cleaved as a signal peptide; sequence MQGVTRASILLIIYHLFTLSLGQLHG. The Extracellular portion of the chain corresponds to 27–231; sequence EKGISVPEHG…FSQDEIRFAR (205 aa). Positions 33–152 constitute an FZ domain; the sequence is PEHGFCQPIS…HGAEQICVGQ (120 aa). Intrachain disulfides connect Cys38–Cys99, Cys46–Cys92, Cys83–Cys120, Cys109–Cys149, and Cys113–Cys137. N-linked (GlcNAc...) asparagine glycosylation occurs at Asn52. Asn153 carries an N-linked (GlcNAc...) asparagine glycan. The chain crosses the membrane as a helical span at residues 232 to 252; it reads IWILIWSVLCCASTFITVTTY. Over 253-265 the chain is Cytoplasmic; it reads LVDMQRFRYPERP. The chain crosses the membrane as a helical span at residues 266–286; sequence IIFLSGCYTMVSVAYIAGFVL. At 287–313 the chain is on the extracellular side; the sequence is GDKVVCNEGFSEDGYKTVVQGTKKEGC. A helical membrane pass occupies residues 314-334; that stretch reads TILFMMLYFFSMASSIWWVIL. The Cytoplasmic segment spans residues 335–356; it reads SLTWFLAAGMKWGHEAIEANSQ. The helical transmembrane segment at 357–377 threads the bilayer; that stretch reads YFHLAAWAVPAVKTITILAMG. Topologically, residues 378–400 are extracellular; the sequence is QIDGDLLSGVCFVGLNNIDPLRG. A helical transmembrane segment spans residues 401-421; that stretch reads FVLAPLFVYLFIGTSFLLAGF. Over 422–447 the chain is Cytoplasmic; the sequence is VSLFRIRTIMKHDGTKTEKLERLMVR. Residues 448–468 traverse the membrane as a helical segment; it reads IGVFSVLYTVPATIVIACYFY. Residues 469–505 are Extracellular-facing; it reads EQAFREHWERSWVSQNCKSLAIPCPLQYTPRMTPDFT. The helical transmembrane segment at 506-526 threads the bilayer; it reads VYMIKYLMTLIVGITSGFWIW. Residues 527–534 are Cytoplasmic-facing; it reads SGKTLHSW. Positions 529–534 match the Lys-Thr-X-X-X-Trp motif, mediates interaction with the PDZ domain of Dvl family members motif; sequence KTLHSW. Residues 549-551 carry the PDZ-binding motif; the sequence is TTV.

Belongs to the G-protein coupled receptor Fz/Smo family. As to expression, widely expressed, especially in the eye anlage, otic vesicle and developing somites.

The protein resides in the membrane. It localises to the cell membrane. Its function is as follows. Receptor for Wnt proteins. Most of frizzled receptors are coupled to the beta-catenin canonical signaling pathway, which leads to the activation of disheveled proteins, inhibition of GSK-3 kinase, nuclear accumulation of beta-catenin and activation of Wnt target genes. A second signaling pathway involving PKC and calcium fluxes has been seen for some family members, but it is not yet clear if it represents a distinct pathway or if it can be integrated in the canonical pathway, as PKC seems to be required for Wnt-mediated inactivation of GSK-3 kinase. Both pathways seem to involve interactions with G-proteins. May be involved in transduction and intercellular transmission of polarity information during tissue morphogenesis and/or in differentiated tissues. The protein is Frizzled-2 (fzd2) of Xenopus laevis (African clawed frog).